The following is a 133-amino-acid chain: Ribonuclease VapC29 (133 aa).

Residues 3–122 (VLLDANVLIA…TLDSGLAHLH (120 aa)) form the PINc domain. Mg(2+)-binding residues include Asp6 and Asp97.

It belongs to the PINc/VapC protein family. Mg(2+) is required as a cofactor.

Its function is as follows. Toxic component of a type II toxin-antitoxin (TA) system. Its cognate antitoxin is VapB29. Has ribonuclease activity. In Mycobacterium tuberculosis (strain CDC 1551 / Oshkosh), this protein is Ribonuclease VapC29.